A 331-amino-acid chain; its full sequence is 4-hydroxythreonine-4-phosphate dehydrogenase (331 aa).

Substrate-binding residues include His-137 and Thr-138. Positions 167, 212, and 267 each coordinate a divalent metal cation. The substrate site is built by Lys-275, Asn-284, and Arg-293.

The protein belongs to the PdxA family. Homodimer. Zn(2+) is required as a cofactor. It depends on Mg(2+) as a cofactor. The cofactor is Co(2+).

The protein resides in the cytoplasm. The catalysed reaction is 4-(phosphooxy)-L-threonine + NAD(+) = 3-amino-2-oxopropyl phosphate + CO2 + NADH. The protein operates within cofactor biosynthesis; pyridoxine 5'-phosphate biosynthesis; pyridoxine 5'-phosphate from D-erythrose 4-phosphate: step 4/5. Its function is as follows. Catalyzes the NAD(P)-dependent oxidation of 4-(phosphooxy)-L-threonine (HTP) into 2-amino-3-oxo-4-(phosphooxy)butyric acid which spontaneously decarboxylates to form 3-amino-2-oxopropyl phosphate (AHAP). This chain is 4-hydroxythreonine-4-phosphate dehydrogenase, found in Yersinia enterocolitica serotype O:8 / biotype 1B (strain NCTC 13174 / 8081).